The chain runs to 354 residues: Clavesin-1 (354 aa).

One can recognise a CRAL-TRIO domain in the interval 118–279 (IKRALIDGFP…EFGGTLPPYD (162 aa)). The tract at residues 317–354 (RECSPKPMKRSQSVVEAGTLKHEEKGENENTQPLLALD) is disordered. The segment covering 335-344 (TLKHEEKGEN) has biased composition (basic and acidic residues). Polar residues predominate over residues 345 to 354 (ENTQPLLALD).

As to quaternary structure, forms a complex with clathrin heavy chain and gamma-adaptin.

The protein resides in the golgi apparatus. It is found in the trans-Golgi network membrane. It localises to the early endosome membrane. The protein localises to the cytoplasmic vesicle. Its subcellular location is the clathrin-coated vesicle. Functionally, required for normal morphology of late endosomes and/or lysosomes in neurons. Binds phosphatidylinositol 3,5-bisphosphate (PtdIns(3,5)P2). The protein is Clavesin-1 (Clvs1) of Mus musculus (Mouse).